Here is a 243-residue protein sequence, read N- to C-terminus: Small ribosomal subunit protein uS3 (243 aa).

The KH type-2 domain occupies 39–110; it reads IRTFIQKKYG…QVRINVVEVE (72 aa). Residues 216 to 243 form a disordered region; the sequence is KTIPVGASPKRKAGRRPQQFEDRSNENS. Residues 233–243 show a composition bias toward basic and acidic residues; it reads QQFEDRSNENS.

It belongs to the universal ribosomal protein uS3 family. In terms of assembly, part of the 30S ribosomal subunit. Forms a tight complex with proteins S10 and S14.

In terms of biological role, binds the lower part of the 30S subunit head. Binds mRNA in the 70S ribosome, positioning it for translation. This chain is Small ribosomal subunit protein uS3, found in Prochlorococcus marinus (strain MIT 9312).